The following is a 195-amino-acid chain: dTTP/UTP pyrophosphatase (195 aa).

The Proton acceptor role is filled by aspartate 76.

The protein belongs to the Maf family. YhdE subfamily. Requires a divalent metal cation as cofactor.

The protein localises to the cytoplasm. It catalyses the reaction dTTP + H2O = dTMP + diphosphate + H(+). The catalysed reaction is UTP + H2O = UMP + diphosphate + H(+). Its function is as follows. Nucleoside triphosphate pyrophosphatase that hydrolyzes dTTP and UTP. May have a dual role in cell division arrest and in preventing the incorporation of modified nucleotides into cellular nucleic acids. This is dTTP/UTP pyrophosphatase from Shewanella frigidimarina (strain NCIMB 400).